The primary structure comprises 65 residues: Large ribosomal subunit protein bL31 (65 aa).

Residues Cys16, Cys18, Cys36, and Cys39 each coordinate Zn(2+).

This sequence belongs to the bacterial ribosomal protein bL31 family. Type A subfamily. In terms of assembly, part of the 50S ribosomal subunit. Requires Zn(2+) as cofactor.

In terms of biological role, binds the 23S rRNA. This Alkaliphilus metalliredigens (strain QYMF) protein is Large ribosomal subunit protein bL31.